The chain runs to 173 residues: Bifunctional protein PyrR (173 aa).

Positions 93–105 match the PRPP-binding motif; sequence IILVDDVLYTGRT.

This sequence belongs to the purine/pyrimidine phosphoribosyltransferase family. PyrR subfamily. In terms of assembly, homodimer and homohexamer; in equilibrium.

The enzyme catalyses UMP + diphosphate = 5-phospho-alpha-D-ribose 1-diphosphate + uracil. Functionally, regulates transcriptional attenuation of the pyrimidine nucleotide (pyr) operon by binding in a uridine-dependent manner to specific sites on pyr mRNA. This disrupts an antiterminator hairpin in the RNA and favors formation of a downstream transcription terminator, leading to a reduced expression of downstream genes. In terms of biological role, also displays a weak uracil phosphoribosyltransferase activity which is not physiologically significant. This is Bifunctional protein PyrR from Streptococcus equi subsp. zooepidemicus (strain MGCS10565).